Reading from the N-terminus, the 188-residue chain is Ribosome-recycling factor (188 aa).

The protein belongs to the RRF family.

Its subcellular location is the cytoplasm. Responsible for the release of ribosomes from messenger RNA at the termination of protein biosynthesis. May increase the efficiency of translation by recycling ribosomes from one round of translation to another. This Cereibacter sphaeroides (strain ATCC 17025 / ATH 2.4.3) (Rhodobacter sphaeroides) protein is Ribosome-recycling factor.